An 876-amino-acid chain; its full sequence is Liprin-beta-2 (876 aa).

Residues 101-313 are a coiled coil; it reads AASNETYQER…TGLLNQYRKV (213 aa). Phosphoserine is present on residues S329, S363, and S387. Positions 356-376 are disordered; the sequence is EMPPRCSSPTVGPPPLPQKSL. Disordered regions lie at residues 425-451 and 470-500; these read LPGK…PDAT and VVND…PKGI. A compositionally biased stretch (polar residues) spans 473–489; it reads DLSSTSSGTESGPQSPL. S512 carries the phosphoserine modification. Residues 527–553 form a disordered region; sequence RGGLRATAGPRLSRTRDSKGQKSDANA. 3 consecutive SAM domains span residues 558-622, 630-693, and 718-783; these read WSTE…INTK, LDHI…LHVN, and WSNH…KFNA.

Belongs to the liprin family. Liprin-beta subfamily. Forms homodimers and heterodimers. As to expression, widely expressed.

In terms of biological role, may regulate the disassembly of focal adhesions. Did not bind receptor-like tyrosine phosphatases type 2A. In Homo sapiens (Human), this protein is Liprin-beta-2 (PPFIBP2).